Consider the following 229-residue polypeptide: Cytochrome b translational activator protein CBS1, mitochondrial (229 aa).

A mitochondrion-targeting transit peptide spans 1 to 25 (MLRTKVFATTVARISGIRRYIPIRT).

It localises to the mitochondrion inner membrane. In terms of biological role, mRNA-specific translational activator of cytochrome b. The cytochrome b (COB) leader RNA may represent the target sequence for CBS1 and CBS2, tethering the COB mRNA to the inner mitochondrial membrane, where cotranslational insertion of cytochrome b into the membrane can occur. The sequence is that of Cytochrome b translational activator protein CBS1, mitochondrial (CBS1) from Saccharomyces cerevisiae (strain ATCC 204508 / S288c) (Baker's yeast).